The following is a 607-amino-acid chain: UvrABC system protein C (607 aa).

A GIY-YIG domain is found at 16–94; the sequence is GRPGVYRMFD…IKEWRPPYNI (79 aa). The region spanning 203–238 is the UVR domain; it reads QQLGNELNAEMEKAAMALDFEKAAELRDQIALLRRV.

It belongs to the UvrC family. Interacts with UvrB in an incision complex.

The protein resides in the cytoplasm. Functionally, the UvrABC repair system catalyzes the recognition and processing of DNA lesions. UvrC both incises the 5' and 3' sides of the lesion. The N-terminal half is responsible for the 3' incision and the C-terminal half is responsible for the 5' incision. The chain is UvrABC system protein C from Pseudomonas putida (strain ATCC 700007 / DSM 6899 / JCM 31910 / BCRC 17059 / LMG 24140 / F1).